The following is a 152-amino-acid chain: MSQPCPCGSADEYSLCCGRIVSGERVAPDPSHLMRSRYCAFVMKDADYLIKSWHPTCNAAAFRDDIIAGFANTRWLGLTIFEHTWSEAENTGYVSFIARFSEQGKTGAIIERSRFIKENGQWYYIDGTRPQLGRNDPCPCGSGKKFKKCCGQ.

This sequence belongs to the UPF0225 family.

This Salmonella gallinarum (strain 287/91 / NCTC 13346) protein is UPF0225 protein YchJ.